A 244-amino-acid chain; its full sequence is Myrosinase MB1 (244 aa).

Residue Asn-32 is glycosylated (N-linked (GlcNAc...) asparagine). Residue Tyr-51 coordinates substrate. The active-site Nucleophile is the Glu-125. Substrate contacts are provided by residues Trp-173 and Glu-180–Phe-181. A glycan (N-linked (GlcNAc...) asparagine) is linked at Asn-216.

Belongs to the glycosyl hydrolase 1 family. As to quaternary structure, homodimer. In vacuoles called myrosin grains of a certain class of cells, myrosin cells, distributed in the cotyledons and the axis of the embryo as well as in different organs of the growing plant.

It localises to the vacuole. It catalyses the reaction a thioglucoside + H2O = a sugar + a thiol.. Functionally, degradation of glucosinolates (glucose residue linked by a thioglucoside bound to an amino acid derivative) to glucose, sulfate and any of the products: thiocyanates, isothiocyanates, nitriles, epithionitriles or oxazolidine-2-thiones. The chain is Myrosinase MB1 from Sinapis alba (White mustard).